A 457-amino-acid polypeptide reads, in one-letter code: UPF0328 protein ECU05_0030 (457 aa).

2 disordered regions span residues 1 to 112 and 157 to 183; these read MPRP…PTAT and VKSQ…NPRI. The span at 74–94 shows a compositional bias: basic and acidic residues; sequence HTEGCHTHEANPEPNTKHTET. Positions 102–112 are enriched in pro residues; the sequence is CPPPHPGPTAT.

This sequence belongs to the UPF0328 family.

The protein is UPF0328 protein ECU05_0030 of Encephalitozoon cuniculi (strain GB-M1) (Microsporidian parasite).